Consider the following 343-residue polypeptide: Small ribosomal subunit biogenesis GTPase RsgA (343 aa).

One can recognise a CP-type G domain in the interval R116–F275. GTP contacts are provided by residues N163 to D166 and G217 to S225. Zn(2+) contacts are provided by C299, C304, H306, and C312.

This sequence belongs to the TRAFAC class YlqF/YawG GTPase family. RsgA subfamily. As to quaternary structure, monomer. Associates with 30S ribosomal subunit, binds 16S rRNA. Requires Zn(2+) as cofactor.

The protein localises to the cytoplasm. One of several proteins that assist in the late maturation steps of the functional core of the 30S ribosomal subunit. Helps release RbfA from mature subunits. May play a role in the assembly of ribosomal proteins into the subunit. Circularly permuted GTPase that catalyzes slow GTP hydrolysis, GTPase activity is stimulated by the 30S ribosomal subunit. This is Small ribosomal subunit biogenesis GTPase RsgA from Pseudomonas fluorescens (strain ATCC BAA-477 / NRRL B-23932 / Pf-5).